We begin with the raw amino-acid sequence, 320 residues long: MQTINTFSWINQRITRSISVLLLVYIITRTSISSAYPIFAQRGYENPREATGRIVCANCHLANKPVDIEVPQAVLPDTVFEAVVRIPYDSQLKQVLSNGKKGGLNVGAVIILPEGFELAPPDRLSPQMKEKIGNLSFQNYRPNQKNIIVVGPVPGQKYSEITFPILSPDPATKKDAHFLKYPIYVGGNRGRGQIYPDGSKSNNTFYSATAAGIVSKIIRKEKGGYEITITDASDSHQVVEIIPPGPELLVSEGEYLKFDQPLTSNPNVGGFGQGDGEIVLQDPLRVQGLLFFLASVILAQIFLVLKKKQFEKVQLAEMNL.

A signal peptide spans M1–A35. Residues Y36, C56, C59, and H60 each contribute to the heme site. The chain crosses the membrane as a helical span at residues V286–K306.

The protein belongs to the cytochrome f family. As to quaternary structure, the 4 large subunits of the cytochrome b6-f complex are cytochrome b6, subunit IV (17 kDa polypeptide, petD), cytochrome f and the Rieske protein, while the 4 small subunits are PetG, PetL, PetM and PetN. The complex functions as a dimer. Heme serves as cofactor.

The protein resides in the plastid thylakoid membrane. Functionally, component of the cytochrome b6-f complex, which mediates electron transfer between photosystem II (PSII) and photosystem I (PSI), cyclic electron flow around PSI, and state transitions. The polypeptide is Cytochrome f (Cuscuta exaltata (Tall dodder)).